A 120-amino-acid chain; its full sequence is Ribonuclease P protein component (120 aa).

It belongs to the RnpA family. As to quaternary structure, consists of a catalytic RNA component (M1 or rnpB) and a protein subunit.

The enzyme catalyses Endonucleolytic cleavage of RNA, removing 5'-extranucleotides from tRNA precursor.. Its function is as follows. RNaseP catalyzes the removal of the 5'-leader sequence from pre-tRNA to produce the mature 5'-terminus. It can also cleave other RNA substrates such as 4.5S RNA. The protein component plays an auxiliary but essential role in vivo by binding to the 5'-leader sequence and broadening the substrate specificity of the ribozyme. The protein is Ribonuclease P protein component of Blochmanniella floridana.